Reading from the N-terminus, the 901-residue chain is Vacuolar import and degradation protein 22 (901 aa).

Residues 1 to 10 show a composition bias toward polar residues; sequence MRAMDTQVQS. Residues 1–54 are disordered; that stretch reads MRAMDTQVQSAERGLVLPPMNSTVSSATAATTATNTDTDTDGDRDEERESLAED. A glycan (N-linked (GlcNAc...) asparagine) is linked at N21. The segment covering 27 to 37 has biased composition (low complexity); sequence ATAATTATNTD. A BED-type zinc finger spans residues 66 to 122; it reads RDRSRYLGHFLGVDKMLEAVKCKYCGVIIRRQGNSISMAEASQTHLWSTHKIDPNAN. Residues C87, C90, H110, and H115 each coordinate Zn(2+). N242 and N291 each carry an N-linked (GlcNAc...) asparagine glycan. The helical transmembrane segment at 381–401 threads the bilayer; sequence YYHNCIISIINSAILPLFGTP. 9 N-linked (GlcNAc...) asparagine glycosylation sites follow: N540, N645, N649, N652, N662, N669, N673, N688, and N722. The segment covering 646 to 677 has biased composition (low complexity); it reads NSHNTSNHSNMNIHTDNQTNNINNRSGNNSDN. Positions 646–727 are disordered; it reads NSHNTSNHSN…NSNNNLSFGS (82 aa). Residues 679-688 show a composition bias toward basic and acidic residues; the sequence is DNEHDNDNDN. Positions 718–727 are enriched in low complexity; that stretch reads NSNNNLSFGS.

This sequence belongs to the VID22 family. Glycosylated.

The protein localises to the cell membrane. The protein resides in the nucleus. Its function is as follows. Has a role in the negative regulation of gluconeogenesis. Imports fructose-1,6-bisphosphatase (FBPase) into the intermediate vacuole import and degradation (Vid) vesicles. This is an indirect role and requires cyclophilin A. The chain is Vacuolar import and degradation protein 22 (VID22) from Saccharomyces cerevisiae (strain ATCC 204508 / S288c) (Baker's yeast).